Consider the following 404-residue polypeptide: Protein translocase subunit SecF (404 aa).

The next 6 membrane-spanning stretches (helical) occupy residues 15 to 35 (KWYF…SMGA), 225 to 245 (LLAT…RFEL), 246 to 266 (IYGI…VGAF), 275 to 295 (LTVV…TIVV), 327 to 347 (ILTS…GGEV), and 355 to 375 (LVIG…PMLV).

This sequence belongs to the SecD/SecF family. SecF subfamily. As to quaternary structure, forms a complex with SecD. Part of the essential Sec protein translocation apparatus which comprises SecA, SecYEG and auxiliary proteins SecDF. Other proteins may also be involved.

Its subcellular location is the cell inner membrane. In terms of biological role, part of the Sec protein translocase complex. Interacts with the SecYEG preprotein conducting channel. SecDF uses the proton motive force (PMF) to complete protein translocation after the ATP-dependent function of SecA. The sequence is that of Protein translocase subunit SecF from Koribacter versatilis (strain Ellin345).